The following is a 315-amino-acid chain: Porphobilinogen deaminase (315 aa).

Cys-241 carries the post-translational modification S-(dipyrrolylmethanemethyl)cysteine.

This sequence belongs to the HMBS family. Monomer. Dipyrromethane serves as cofactor.

The catalysed reaction is 4 porphobilinogen + H2O = hydroxymethylbilane + 4 NH4(+). The protein operates within porphyrin-containing compound metabolism; protoporphyrin-IX biosynthesis; coproporphyrinogen-III from 5-aminolevulinate: step 2/4. Functionally, tetrapolymerization of the monopyrrole PBG into the hydroxymethylbilane pre-uroporphyrinogen in several discrete steps. The polypeptide is Porphobilinogen deaminase (Nitratidesulfovibrio vulgaris (strain DP4) (Desulfovibrio vulgaris)).